Reading from the N-terminus, the 165-residue chain is LDYRWMPYKRISTNLKKALIASEDARFAGHGGFDWGGIQNAIRRNRNSGKVKAGGSTISQQLAKNLFLNESRSYIRKGEEAAITAMMEAVTDKDRIFELYLNSIEWHYGVFGAEAASRYFYQIPAAKLTKQQAAKLTARVPAPLYYADHPKSKRLRNKTNIVLRR.

It belongs to the glycosyltransferase 51 family.

Its subcellular location is the cell inner membrane. The catalysed reaction is [GlcNAc-(1-&gt;4)-Mur2Ac(oyl-L-Ala-gamma-D-Glu-L-Lys-D-Ala-D-Ala)](n)-di-trans,octa-cis-undecaprenyl diphosphate + beta-D-GlcNAc-(1-&gt;4)-Mur2Ac(oyl-L-Ala-gamma-D-Glu-L-Lys-D-Ala-D-Ala)-di-trans,octa-cis-undecaprenyl diphosphate = [GlcNAc-(1-&gt;4)-Mur2Ac(oyl-L-Ala-gamma-D-Glu-L-Lys-D-Ala-D-Ala)](n+1)-di-trans,octa-cis-undecaprenyl diphosphate + di-trans,octa-cis-undecaprenyl diphosphate + H(+). Its pathway is cell wall biogenesis; peptidoglycan biosynthesis. Its function is as follows. Peptidoglycan polymerase that catalyzes glycan chain elongation from lipid-linked precursors. The protein is Biosynthetic peptidoglycan transglycosylase of Neisseria meningitidis.